Consider the following 1087-residue polypeptide: APDPGPGPMGMMGARGPPGPPGKSGEDGNNGRPGKPGDRGAPGPQGARGFPGTPGLPGMKGHRGYTGLDGRKGEPGGAGAKGEPGAHGAAGSPGLAGSRGRAGPAGPAGARAGPLGAAGPPGFPGGPGPKGELGPAGATGPSGAQGSRGEPGPNGAVGPVGPPGNPGNNGLNGAKGAAGTPGVAGAPGFPGPRGGPGPQGPQGAAGQRGLAGDPGTQGVKGDGGPKGEPGNSGPQGSPGPQGEEGKRGPTGELGATGPAGNRGARGMPGSEGRGASGAAGPRGPPGDAGRAGESGPAGLRGLPGSPGSSGPPGKEGPAGPSGQDGRGGPPGPTGPRGQPGNLGFPGPKGPGGEAGKPGDKGATGPTGLRGPPGPDGNNGATGATGPAGGPGEKGEQGAAGAPGFQGLPGPAGGAGEAGKPGDRGLPGDQGVSGPAGAKGERGNPGAAGASGPQGPLGPRGPAGAPGTDGGKGEPGAAGAAGGPGHQGPGGMPGERGAAGAPGGKGEKGEAGHRGPDGNAGRDGSRGMPGPAGPPGPTGANGDKGSFGPAGPAGARGEVGPAGAPGFAGPPGADGQTGARPAGPAGQSGPPGASGPAGPTGARGDXGPPGLTGFPGAAGRVGAAGPAGLVGPPGSAGPAGKDGPRGLRGDPGPSGPSGDQGMVGPPGPSGEKGPSGEPGPAGSPGTPGTSGPLGLQGFVGLPGARGDRGSPGGAGAVGEPGRVGPAGPAGARGAPGNLGLPGMTGPQGEAGREGNPGNDGPPGRPGAPGFKGDRGEPGSSGAMGLAGAPGPAGPSGGAGRGNRGESGPGGAAGAVGPAGARGAAGPSGPRGEKGVAGEKGERGLRGHAGLQGMPGPSGPSGDTGSAGPNGPAGPRGPAGPHGPPGKDGRAGGHGTLGAPGARGPPGYVGPAGPPGSPGLPGPPGPAGGGYDVSGYDEYRAAKDYEVDATLKSLNTQLENLLTPEGSRKLSHPEWSSGFYWLDPNQGCSNDALKVFCDFTTRETCLHAHPGSLARNSNAYMSDETGDLKRAVVVQGSNDVELRFTFSVLEDGCTRTNKPSRLPLLDLAPLDLGGADQEFGLDLGPVCFK.

Positions 1 to 931 (APDPGPGPMG…PGPAGGGYDV (931 aa)) are disordered. Low complexity-rich tracts occupy residues 83–120 (EPGA…AAGP), 150–159 (EPGPNGAVGP), and 166–187 (PGNN…AGAP). A compositionally biased stretch (pro residues) spans 189-199 (FPGPRGGPGPQ). The segment covering 201–211 (PQGAAGQRGLA) has biased composition (low complexity). Gly residues predominate over residues 218–227 (GVKGDGGPKG). Composition is skewed to low complexity over residues 228 to 241 (EPGN…PGPQ), 278 to 321 (AAGP…AGPS), 335 to 345 (PRGQPGNLGFP), 360 to 384 (KGAT…TGAT), and 396 to 408 (QGAA…QGLP). Residues 409 to 418 (GPAGGAGEAG) are compositionally biased toward gly residues. A compositionally biased stretch (low complexity) spans 443-453 (NPGAAGASGPQ). Gly residues predominate over residues 466–493 (GTDGGKGEPGAAGAAGGPGHQGPGGMPG). A compositionally biased stretch (basic and acidic residues) spans 504-515 (KGEKGEAGHRGP). Composition is skewed to low complexity over residues 560-602 (PAGA…TGAR), 613-640 (FPGA…PAGK), and 677-695 (PGPA…LGLQ). Over residues 708 to 717 (GSPGGAGAVG) the composition is skewed to gly residues. 2 stretches are compositionally biased toward low complexity: residues 718-740 (EPGR…LGLP) and 776-788 (PGSS…AGAP). The span at 792-812 (GPSGGAGRGNRGESGPGGAAG) shows a compositional bias: gly residues. A compositionally biased stretch (low complexity) spans 813–828 (AVGPAGARGAAGPSGP). The span at 829 to 843 (RGEKGVAGEKGERGL) shows a compositional bias: basic and acidic residues. Composition is skewed to low complexity over residues 849 to 868 (LQGM…AGPN) and 897 to 909 (APGA…YVGP). The segment covering 910–924 (AGPPGSPGLPGPPGP) has biased composition (pro residues). One can recognise a Fibrillar collagen NC1 domain in the interval 929–1087 (YDVSGYDEYR…GLDLGPVCFK (159 aa)).

Belongs to the fibrillar collagen family.

The protein resides in the secreted. It localises to the extracellular space. Its subcellular location is the extracellular matrix. The protein is Collagen alpha-2(I) chain of Epinephelus costae (Goldblotch grouper).